A 72-amino-acid polypeptide reads, in one-letter code: PAMP-induced secreted peptide 1 (72 aa).

An N-terminal signal peptide occupies residues 1 to 30; the sequence is MRRVSWSTVLIVVVMVSLFFVEHVVVPAAA. A 4-hydroxyproline mark is found at Pro-65 and Pro-67.

Contains 4-hydroxyproline; hydroxylated on Pro-65 and Pro-67. In terms of tissue distribution, expressed in guard cells, hydathodes, leaf trichomes, and vascular tissues of leaves and roots.

The protein localises to the secreted. It is found in the extracellular space. It localises to the apoplast. In terms of biological role, endogenous secreted peptide that acts as elicitor of immune response and positive regulator of defense response. Amplifies the immune response triggered by flg22, the active epitope of bacterial flagellin. Acts as a negative regulator of root growth. This chain is PAMP-induced secreted peptide 1, found in Arabidopsis thaliana (Mouse-ear cress).